A 353-amino-acid polypeptide reads, in one-letter code: uncharacterized protein (353 aa).

Zn(2+) contacts are provided by cysteine 40, histidine 70, cysteine 100, cysteine 103, cysteine 106, cysteine 114, and cysteine 158.

It belongs to the zinc-containing alcohol dehydrogenase family. Requires Zn(2+) as cofactor.

This is an uncharacterized protein from Escherichia coli (strain K12).